We begin with the raw amino-acid sequence, 152 residues long: Nucleoside diphosphate kinase (152 aa).

Lysine 11, phenylalanine 59, arginine 87, threonine 93, arginine 104, and asparagine 114 together coordinate ATP. Histidine 117 serves as the catalytic Pros-phosphohistidine intermediate.

The protein belongs to the NDK family. As to quaternary structure, homotetramer. Requires Mg(2+) as cofactor.

It is found in the cytoplasm. It carries out the reaction dZDP + ATP = dZTP + ADP. It catalyses the reaction a 2'-deoxyribonucleoside 5'-diphosphate + ATP = a 2'-deoxyribonucleoside 5'-triphosphate + ADP. The catalysed reaction is a ribonucleoside 5'-diphosphate + ATP = a ribonucleoside 5'-triphosphate + ADP. It functions in the pathway purine metabolism. Major role in the synthesis of nucleoside triphosphates other than ATP. The ATP gamma phosphate is transferred to the NDP beta phosphate via a ping-pong mechanism, using a phosphorylated active-site intermediate. In terms of biological role, (Microbial infection) Catalyzes the phosphorylation of dZDP to dZTP, when the bacterium is infected by a phage that produces the substrate for the synthesis of dZTP (2- amino-2'-deoxyadenosine 5'-triphosphate), which is then used by the phage as a DNA polymerase substrate. The chain is Nucleoside diphosphate kinase from Synechococcus sp. (strain WH7803).